A 376-amino-acid chain; its full sequence is Chaperone protein DnaJ (376 aa).

One can recognise a J domain in the interval D4–G68. A CR-type zinc finger spans residues G135–T217. Zn(2+) contacts are provided by C148, C151, C165, C168, C191, C194, C205, and C208. 4 CXXCXGXG motif repeats span residues C148–G155, C165–G172, C191–G198, and C205–G212.

It belongs to the DnaJ family. Homodimer. Zn(2+) serves as cofactor.

Its subcellular location is the cytoplasm. Participates actively in the response to hyperosmotic and heat shock by preventing the aggregation of stress-denatured proteins and by disaggregating proteins, also in an autonomous, DnaK-independent fashion. Unfolded proteins bind initially to DnaJ; upon interaction with the DnaJ-bound protein, DnaK hydrolyzes its bound ATP, resulting in the formation of a stable complex. GrpE releases ADP from DnaK; ATP binding to DnaK triggers the release of the substrate protein, thus completing the reaction cycle. Several rounds of ATP-dependent interactions between DnaJ, DnaK and GrpE are required for fully efficient folding. Also involved, together with DnaK and GrpE, in the DNA replication of plasmids through activation of initiation proteins. This chain is Chaperone protein DnaJ, found in Crocosphaera subtropica (strain ATCC 51142 / BH68) (Cyanothece sp. (strain ATCC 51142)).